Here is a 304-residue protein sequence, read N- to C-terminus: Nicotinamide/nicotinic acid mononucleotide adenylyltransferase 2 (304 aa).

The NAD(+) site is built by Ser16 and Phe17. His24 lines the ATP pocket. Trp92 and Thr95 together coordinate NAD(+). Residues Cys161 and Cys162 are each lipidated (S-palmitoyl cysteine). NAD(+)-binding residues include Gly197, Asp199, Leu209, Trp210, and Arg229. Residue 268–271 participates in ATP binding; the sequence is TKSR.

This sequence belongs to the eukaryotic NMN adenylyltransferase family. In terms of assembly, monomer. Requires Mg(2+) as cofactor.

The protein localises to the golgi apparatus membrane. The protein resides in the cytoplasmic vesicle membrane. Its subcellular location is the cytoplasm. It localises to the cell projection. It is found in the axon. The enzyme catalyses beta-nicotinamide D-ribonucleotide + ATP + H(+) = diphosphate + NAD(+). It catalyses the reaction nicotinate beta-D-ribonucleotide + ATP + H(+) = deamido-NAD(+) + diphosphate. Its pathway is cofactor biosynthesis; NAD(+) biosynthesis; NAD(+) from nicotinamide D-ribonucleotide: step 1/1. The protein operates within cofactor biosynthesis; NAD(+) biosynthesis; deamido-NAD(+) from nicotinate D-ribonucleotide: step 1/1. Functionally, nicotinamide/nicotinate-nucleotide adenylyltransferase that acts as an axon maintenance factor. Axon survival factor required for the maintenance of healthy axons: acts by delaying Wallerian axon degeneration, an evolutionarily conserved process that drives the loss of damaged axons. Catalyzes the formation of NAD(+) from nicotinamide mononucleotide (NMN) and ATP. Can also use the deamidated form; nicotinic acid mononucleotide (NaMN) as substrate but with a lower efficiency. Also catalyzes the reverse reaction, i.e. the pyrophosphorolytic cleavage of NAD(+). For the pyrophosphorolytic activity prefers NAD(+), NADH and NaAD as substrates and degrades nicotinic acid adenine dinucleotide phosphate (NHD) less effectively. Also acts as an activator of ADP-ribosylation by supporting the catalytic activity of PARP16 and promoting mono-ADP-ribosylation of ribosomes by PARP16. May be involved in the maintenance of axonal integrity. This Danio rerio (Zebrafish) protein is Nicotinamide/nicotinic acid mononucleotide adenylyltransferase 2 (nmnat2).